A 248-amino-acid chain; its full sequence is Chromatin target of PRMT1 protein (248 aa).

Position 2 is an N-acetylalanine (alanine 2). Residue threonine 33 is modified to Phosphothreonine. Phosphoserine is present on residues serine 40, serine 49, and serine 64. Lysine 70 is covalently cross-linked (Glycyl lysine isopeptide (Lys-Gly) (interchain with G-Cter in SUMO2)). The interval 151–204 (LRRGGVRGRGGPGRGGLGRGAMGRGGIGGRGRGMIGRGRGGFGGRGRGRGRGRG) is disordered. The interval 153–206 (RGGVRGRGGPGRGGLGRGAMGRGGIGGRGRGMIGRGRGGFGGRGRGRGRGRGAL) is interaction with PRMT1. The segment covering 157–195 (RGRGGPGRGGLGRGAMGRGGIGGRGRGMIGRGRGGFGGR) has biased composition (gly residues). Positions 194 to 203 (GRGRGRGRGR) match the GAR motif; involved in 5hmC binding motif. Threonine 242 is subject to Phosphothreonine.

As to quaternary structure, interacts with PRMT1 and PRMT5. Interacts with the 5FMC complex; the interaction is methylation-dependent. Interacts with FYTTD1, SET and PRC1 complex members CBX4, RNF2 and PHC2; the interactions are methylation-independent. Interacts with ZNF148. Component of the transcription/export (TREX) complex at least composed of ALYREF/THOC4, DDX39B, SARNP/CIP29, CHTOP and the THO subcomplex; TREX seems to have dynamic structure involving ATP-dependent remodeling; in the complex interacts (methylated) with ALYREF/THOC4 and with DDX39B in a methylation-independent manner. Interacts (methylated) with NXF1; the interaction is mutually exclusive with the NXF1:THOC5 interaction. Interacts with WDR77 and ERH. Asymmetrically methylated by PRMT1. Symmetrically methylated by PRMT5. Expressed in an erythroid progenitor cell line derived from peripheral blood. Expressed in glioblastoma cells.

It localises to the nucleus. The protein resides in the nucleolus. Its subcellular location is the nucleoplasm. The protein localises to the nucleus speckle. In terms of biological role, plays an important role in the ligand-dependent activation of estrogen receptor target genes. May play a role in the silencing of fetal globin genes. Recruits the 5FMC complex to ZNF148, leading to desumoylation of ZNF148 and subsequent transactivation of ZNF148 target genes. Plays an important role in the tumorigenicity of glioblastoma cells. Binds to 5-hydroxymethylcytosine (5hmC) and associates with the methylosome complex containing PRMT1, PRMT5, MEP50 and ERH. The CHTOP-methylosome complex associated with 5hmC is recruited to selective sites on the chromosome, where it methylates H4R3 and activates the transcription of genes involved in glioblastomagenesis. Required for effective mRNA nuclear export and is a component of the TREX complex which is thought to couple mRNA transcription, processing and nuclear export, and specifically associates with spliced mRNA and not with unspliced pre-mRNA. TREX is recruited to spliced mRNAs by a transcription-independent mechanism, binds to mRNA upstream of the exon-junction complex (EJC) and is recruited in a splicing- and cap-dependent manner to a region near the 5' end of the mRNA where it functions in mRNA export to the cytoplasm via the TAP/NFX1 pathway. The TREX complex is essential for the export of Kaposi's sarcoma-associated herpesvirus (KSHV) intronless mRNAs and infectious virus production. Stimulates DDX39B ATPase and helicase activities. In cooperation with ALYREF/THOC4 enhances NXF1 RNA binding activity. The protein is Chromatin target of PRMT1 protein (CHTOP) of Homo sapiens (Human).